Consider the following 286-residue polypeptide: B3 domain-containing protein REM20 (286 aa).

A DNA-binding region (TF-B3) is located at residues 9-102 (PRFFKVFLVE…TFEVSVFDRW (94 aa)). The tract at residues 117-161 (SDSDSDSVVEDEKDSTDVVEDDDDEDEDEDEDDDGSFDEDEEISQ) is disordered. Positions 119-159 (SDSDSVVEDEKDSTDVVEDDDDEDEDEDEDDDGSFDEDEEI) are enriched in acidic residues.

The protein resides in the nucleus. The polypeptide is B3 domain-containing protein REM20 (REM20) (Arabidopsis thaliana (Mouse-ear cress)).